The chain runs to 171 residues: Adenine phosphoribosyltransferase (171 aa).

This sequence belongs to the purine/pyrimidine phosphoribosyltransferase family. As to quaternary structure, homodimer.

The protein resides in the cytoplasm. It catalyses the reaction AMP + diphosphate = 5-phospho-alpha-D-ribose 1-diphosphate + adenine. The protein operates within purine metabolism; AMP biosynthesis via salvage pathway; AMP from adenine: step 1/1. Functionally, catalyzes a salvage reaction resulting in the formation of AMP, that is energically less costly than de novo synthesis. The chain is Adenine phosphoribosyltransferase from Shouchella clausii (strain KSM-K16) (Alkalihalobacillus clausii).